Reading from the N-terminus, the 178-residue chain is ATP-dependent protease subunit HslV (178 aa).

The active site involves Thr-7. Na(+) is bound by residues Gly-162, Cys-165, and Thr-168.

This sequence belongs to the peptidase T1B family. HslV subfamily. As to quaternary structure, a double ring-shaped homohexamer of HslV is capped on each side by a ring-shaped HslU homohexamer. The assembly of the HslU/HslV complex is dependent on binding of ATP.

The protein resides in the cytoplasm. The enzyme catalyses ATP-dependent cleavage of peptide bonds with broad specificity.. With respect to regulation, allosterically activated by HslU binding. Its function is as follows. Protease subunit of a proteasome-like degradation complex believed to be a general protein degrading machinery. The protein is ATP-dependent protease subunit HslV of Azoarcus sp. (strain BH72).